Reading from the N-terminus, the 356-residue chain is Retinoic acid-induced protein 3 (356 aa).

The Extracellular portion of the chain corresponds to 1-35 (MTTPTTAPSGCRSDLDSRYHRLCDLAEGWGIALET). A helical transmembrane segment spans residues 36-56 (LAAVGAVATVACMFALVFLIC). Residues 57–68 (KVQDSNKRKMLP) are Cytoplasmic-facing. Residues 69-89 (AQFLFLLGVLGVFGLTFAFII) form a helical membrane-spanning segment. The Extracellular portion of the chain corresponds to 90-101 (KLDGATGPTRFF). The chain crosses the membrane as a helical span at residues 102 to 122 (LFGVLFAICFSCLLAHAFNLI). At 123-131 (KLVRGRKPL) the chain is on the cytoplasmic side. The chain crosses the membrane as a helical span at residues 132–152 (SWLVILSLAVGFSLVQDVIAI). Topologically, residues 153–178 (EYLVLTMNRTNVNVFSELPAPRRNED) are extracellular. Residue N160 is glycosylated (N-linked (GlcNAc...) asparagine). The chain crosses the membrane as a helical span at residues 179–199 (FVMLLIYVLVLMVLTFFTSFL). At 200-214 (VFCGSFSGWKRHGFH) the chain is on the cytoplasmic side. Residues 215 to 235 (ICFTSFLSIAIWVAWIVLLLI) traverse the membrane as a helical segment. Over 236 to 244 (PDIDRKWDD) the chain is Extracellular. A helical transmembrane segment spans residues 245–265 (TILSTALVANGWVFLAFYILP). The Cytoplasmic portion of the chain corresponds to 266 to 356 (EFRQLPRQRS…NDYEGRKGDS (91 aa)). S303 carries the post-translational modification Phosphoserine. Y318 and Y321 each carry phosphotyrosine. The disordered stretch occupies residues 336 to 356 (IPRAQAPASPYNDYEGRKGDS). At S344 the chain carries Phosphoserine. 2 positions are modified to phosphotyrosine: Y346 and Y349.

This sequence belongs to the G-protein coupled receptor 3 family. As to quaternary structure, interacts (via its transmembrane domain) with EGFR. In terms of processing, phosphorylated in two conserved double-tyrosine motifs, Tyr 318/Tyr-321 and Tyr-346/Tyr-349 by EGFR. Tyr-318 and Tyr-321 are the preferred residues responsible for EGFR-mediated GPRC5A phosphorylation. As to expression, expressed predominantly in normal fetal and adult lung. Almost undetectable or expressed at very low levels in other tissues.

It is found in the cell membrane. Orphan receptor. Could be involved in modulating differentiation and maintaining homeostasis of epithelial cells. This retinoic acid-inducible GPCR provides evidence for a possible interaction between retinoid and G-protein signaling pathways. Functions as a negative modulator of EGFR signaling. Acts as a lung tumor suppressor. This Mus musculus (Mouse) protein is Retinoic acid-induced protein 3 (Gprc5a).